The following is a 330-amino-acid chain: Stimulated by retinoic acid gene 8 protein homolog (330 aa).

A Nuclear localization signal (NLS) motif is present at residues Arg50 to Arg55. Residues Gln88–Ala112 are a coiled coil.

Interacts with XPO1. Interacts with MEIOSIN. Phosphorylated. In terms of tissue distribution, expressed specifically in testis and fetal ovaries.

Its subcellular location is the cytoplasm. The protein localises to the nucleus. Functionally, meiosis-inducer required for the transition into meiosis for both female and male germ cells. In female germ cells, acts downstream of ZGLP1 as a key effector of the meiotic program: required for premeiotic DNA replication and subsequent events in meiotic prophase. During spermatogenesis, next to its role in meiotic initiation, promotes (but is not required for) spermatogonial differentiation. In complex with MEIOSIN, directly activates the transcription of a subset of critical meiotic genes playing a central role in cell-cycle switching from mitosis to meiosis. In Homo sapiens (Human), this protein is Stimulated by retinoic acid gene 8 protein homolog.